We begin with the raw amino-acid sequence, 231 residues long: NADH-ubiquinone oxidoreductase chain 4 (231 aa).

A run of 6 helical transmembrane segments spans residues 1–21 (PIAG…YGII), 34–54 (MFLP…LTCL), 62–84 (LIAY…QTPW), 89–111 (AMAL…NTTY), 128–148 (ILPM…AIPP), and 169–189 (TIIM…HMFL).

It belongs to the complex I subunit 4 family.

It is found in the mitochondrion membrane. The enzyme catalyses a ubiquinone + NADH + 5 H(+)(in) = a ubiquinol + NAD(+) + 4 H(+)(out). In terms of biological role, core subunit of the mitochondrial membrane respiratory chain NADH dehydrogenase (Complex I) that is believed to belong to the minimal assembly required for catalysis. Complex I functions in the transfer of electrons from NADH to the respiratory chain. The immediate electron acceptor for the enzyme is believed to be ubiquinone. The polypeptide is NADH-ubiquinone oxidoreductase chain 4 (MT-ND4) (Bothrops erythromelas (Caatinga lance head)).